The primary structure comprises 357 residues: mRNA endoribonuclease toxin LS (357 aa).

In terms of assembly, forms homodimer in solution. Forms a complex with cognate antitoxin RnlB and with enterobacteria phage T4 antitoxin Dmd.

It is found in the cytoplasm. Toxic component of a type II toxin-antitoxin (TA) system. A stable (half-life 27.6 minutes) endoribonuclease that in the absence of cognate antitoxin RnlB causes generalized RNA degradation. Degrades late enterobacteria phage T4 mRNAs, protecting the host against T4 reproduction. Activity is inhibited by cognate antitoxin RnlB and by enterobacteria phage T4 protein Dmd. Targets cyaA mRNA. The chain is mRNA endoribonuclease toxin LS (rnlA) from Escherichia coli (strain K12).